The following is a 346-amino-acid chain: tRNA pseudouridine synthase D (346 aa).

Residue Asp83 is the Nucleophile of the active site. The TRUD domain maps to 159–305 (GVPNYFGEQR…LKQERRALRV (147 aa)).

This sequence belongs to the pseudouridine synthase TruD family.

It catalyses the reaction uridine(13) in tRNA = pseudouridine(13) in tRNA. Responsible for synthesis of pseudouridine from uracil-13 in transfer RNAs. This chain is tRNA pseudouridine synthase D, found in Hydrogenovibrio crunogenus (strain DSM 25203 / XCL-2) (Thiomicrospira crunogena).